Here is a 598-residue protein sequence, read N- to C-terminus: Inactive metallocarboxypeptidase ECM14 (598 aa).

A signal peptide spans 1 to 21; the sequence is MRLFTHGQVLALLAFVNTISA. Positions 22 to 174 are excised as a propeptide; sequence IPSFSTNSYP…QTIYESYPSP (153 aa). Positions 202-522 constitute a Peptidase M14 domain; that stretch reads NYQPLSVIVP…NAVMMLGRFL (321 aa). Zn(2+)-binding residues include His-264 and Glu-267. Residues 264-267, Arg-322, and 339-340 contribute to the substrate site; these read HARE and DR. A disulfide bond links Cys-333 and Cys-356. Asn-349 carries an N-linked (GlcNAc...) asparagine glycan. His-396 is a binding site for Zn(2+). 397 to 398 provides a ligand contact to substrate; the sequence is SY. A disordered region spans residues 539 to 598; the sequence is QRPNKDDKPILNDDDDDDDADTNDDGIGRKDDSWIPDEYKGDNDRDESDGGWAFRRLRKR. Positions 550-562 are enriched in acidic residues; sequence NDDDDDDDADTND. Positions 564–581 are enriched in basic and acidic residues; sequence GIGRKDDSWIPDEYKGDN.

It belongs to the peptidase M14 family. Requires Zn(2+) as cofactor.

It is found in the vacuole. Its subcellular location is the secreted. Functionally, inactive carboxypeptidase that may play a role in cell wall organization and biogenesis. This chain is Inactive metallocarboxypeptidase ECM14 (ECM14), found in Ajellomyces capsulatus (strain H143) (Darling's disease fungus).